A 456-amino-acid chain; its full sequence is Cysteine synthase 2 (456 aa).

A helical membrane pass occupies residues 9-29; it reads VYGTVALTAAFAAGILVTLGF.

The protein belongs to the cysteine synthase/cystathionine beta-synthase family. Pyridoxal 5'-phosphate serves as cofactor.

Its subcellular location is the mitochondrion outer membrane. The enzyme catalyses O-acetyl-L-serine + hydrogen sulfide = L-cysteine + acetate. Functionally, putative cysteine synthase that catalyzes the conversion of O-acetyl-L-serine (OAS) into cysteine, the last step in the cysteine biosynthesis pathway. However, in contrast to cysteine synthase cys-17, this CS-like protein may not function in cysteine biosynthesis. The polypeptide is Cysteine synthase 2 (Neurospora crassa (strain ATCC 24698 / 74-OR23-1A / CBS 708.71 / DSM 1257 / FGSC 987)).